A 269-amino-acid chain; its full sequence is Protein OPG079 (269 aa).

The protein belongs to the orthopoxvirus OPG079 family. As to quaternary structure, homoomultimer (Potential). Interacts with the small subunit of ribonucleotide reductase. Interacts with host FAM111A; this interaction protomtes OPG079 degradation through autophagy.

Its subcellular location is the host cytoplasm. Functionally, plays an essential role in viral DNA replication. Binds to ssDNA with high affinity and localizes to cytoplasmic factories where nascent viral genomes accumulate. May disrupt loops, hairpins and other secondary structures present on ssDNA to reduce and eliminate pausing of viral DNA polymerase at specific sites during elongation. The polypeptide is Protein OPG079 (OPG079) (Vaccinia virus (strain Copenhagen) (VACV)).